The primary structure comprises 456 residues: Bifunctional protein GlmU (456 aa).

The tract at residues 1–229 is pyrophosphorylase; it reads MLNSAMSVVI…ISETDGVNNR (229 aa). Residues 11 to 14, Lys-25, Gln-76, 81 to 82, 103 to 105, Gly-140, Glu-154, Asn-169, and Asn-227 each bind UDP-N-acetyl-alpha-D-glucosamine; these read LAAG, GT, and YGD. Asp-105 contributes to the Mg(2+) binding site. Mg(2+) is bound at residue Asn-227. Residues 230 to 250 are linker; it reads LQLSRLERIYQAEQAEKLLLS. The interval 251–456 is N-acetyltransferase; that stretch reads GVMLRDPARF…QGWQRPVKKK (206 aa). Positions 333 and 351 each coordinate UDP-N-acetyl-alpha-D-glucosamine. His-363 (proton acceptor) is an active-site residue. 2 residues coordinate UDP-N-acetyl-alpha-D-glucosamine: Tyr-366 and Asn-377. Residues Ala-380, 386–387, Ser-405, Ala-423, and Arg-440 each bind acetyl-CoA; that span reads NY.

This sequence in the N-terminal section; belongs to the N-acetylglucosamine-1-phosphate uridyltransferase family. The protein in the C-terminal section; belongs to the transferase hexapeptide repeat family. In terms of assembly, homotrimer. The cofactor is Mg(2+).

The protein resides in the cytoplasm. The catalysed reaction is alpha-D-glucosamine 1-phosphate + acetyl-CoA = N-acetyl-alpha-D-glucosamine 1-phosphate + CoA + H(+). The enzyme catalyses N-acetyl-alpha-D-glucosamine 1-phosphate + UTP + H(+) = UDP-N-acetyl-alpha-D-glucosamine + diphosphate. The protein operates within nucleotide-sugar biosynthesis; UDP-N-acetyl-alpha-D-glucosamine biosynthesis; N-acetyl-alpha-D-glucosamine 1-phosphate from alpha-D-glucosamine 6-phosphate (route II): step 2/2. It participates in nucleotide-sugar biosynthesis; UDP-N-acetyl-alpha-D-glucosamine biosynthesis; UDP-N-acetyl-alpha-D-glucosamine from N-acetyl-alpha-D-glucosamine 1-phosphate: step 1/1. It functions in the pathway bacterial outer membrane biogenesis; LPS lipid A biosynthesis. In terms of biological role, catalyzes the last two sequential reactions in the de novo biosynthetic pathway for UDP-N-acetylglucosamine (UDP-GlcNAc). The C-terminal domain catalyzes the transfer of acetyl group from acetyl coenzyme A to glucosamine-1-phosphate (GlcN-1-P) to produce N-acetylglucosamine-1-phosphate (GlcNAc-1-P), which is converted into UDP-GlcNAc by the transfer of uridine 5-monophosphate (from uridine 5-triphosphate), a reaction catalyzed by the N-terminal domain. The sequence is that of Bifunctional protein GlmU from Salmonella gallinarum (strain 287/91 / NCTC 13346).